Consider the following 160-residue polypeptide: Thioredoxin-like protein 4A homolog (160 aa).

Residues 132–160 (KFLKKKKKKKNKKKQKKKIKKIKKKIKNN) form a disordered region. Residues 133–160 (FLKKKKKKKNKKKQKKKIKKIKKKIKNN) show a composition bias toward basic residues.

This sequence belongs to the DIM1 family. As to quaternary structure, component of the precatalytic spliceosome (spliceosome B complex). Component of the U5 snRNP complex. Component of the U4/U6-U5 tri-snRNP complex.

It is found in the nucleus. In terms of biological role, plays a role in pre-mRNA splicing as component of the U5 snRNP and U4/U6-U5 tri-snRNP complexes that are involved in spliceosome assembly, and as component of the precatalytic spliceosome (spliceosome B complex). The chain is Thioredoxin-like protein 4A homolog (txnl4a) from Dictyostelium discoideum (Social amoeba).